The following is a 547-amino-acid chain: Puff-specific protein Bx42 (547 aa).

Residues 177–343 (AQYIRYTPSQ…AREERAGLRN (167 aa)) are SNW. Ser-227 and Ser-235 each carry phosphoserine. Disordered stretches follow at residues 333-398 (RARE…ERDI) and 486-547 (QFSG…SKRD). Basic and acidic residues-rich tracts occupy residues 358 to 398 (EVRE…ERDI) and 526 to 539 (KRAE…SSHS).

It belongs to the SNW family.

It is found in the nucleus. Functionally, may play a role in chromatin structure and function. The polypeptide is Puff-specific protein Bx42 (Bx42) (Drosophila melanogaster (Fruit fly)).